The chain runs to 407 residues: Argininosuccinate synthase (407 aa).

ATP is bound by residues 10–18 (AYSGGLDTS) and Ala37. L-citrulline contacts are provided by Tyr88 and Ser93. ATP is bound at residue Gly118. Thr120, Asn124, and Asp125 together coordinate L-aspartate. Asn124 lines the L-citrulline pocket. The L-citrulline site is built by Arg128, Ser179, Ser188, Glu264, and Tyr276.

Belongs to the argininosuccinate synthase family. Type 1 subfamily. Homotetramer.

It is found in the cytoplasm. It catalyses the reaction L-citrulline + L-aspartate + ATP = 2-(N(omega)-L-arginino)succinate + AMP + diphosphate + H(+). The protein operates within amino-acid biosynthesis; L-arginine biosynthesis; L-arginine from L-ornithine and carbamoyl phosphate: step 2/3. The polypeptide is Argininosuccinate synthase (Jannaschia sp. (strain CCS1)).